A 947-amino-acid chain; its full sequence is Leucine-rich repeat-containing protein 37B (947 aa).

The signal sequence occupies residues 1–27 (MSWLRFWGPWPLLTWQLLSLLVKEAQP). Topologically, residues 28-905 (LVWVKDPLQL…EVPGDDYKNK (878 aa)) are extracellular. Disordered regions lie at residues 42 to 88 (LGPP…ALPQ), 226 to 257 (YLSM…QVGL), 294 to 458 (EVEP…PEPT), and 484 to 514 (SLTE…EQKA). Polar residues predominate over residues 311–320 (SMESLAQTPL). Asparagine 358 carries N-linked (GlcNAc...) asparagine glycosylation. Polar residues-rich tracts occupy residues 404 to 415 (GQAQHSHLTEAT), 436 to 445 (SPTTEETSAQ), and 495 to 507 (LESS…QSET). 6 LRR repeats span residues 556-577 (IFTT…VWKA), 580-601 (WTEK…SFEG), 604-625 (YLQY…TFES), 628-649 (FLQY…TFQA), 655-676 (FLHN…YLFE), and 679-699 (ALKY…KNIL). Asparagine 789 carries N-linked (GlcNAc...) asparagine glycosylation. Positions 867 to 897 (DTDQQKTNYINENMEQNEQKEQKSSELMKEV) form a coiled coil. The helical transmembrane segment at 906 to 926 (LIFAISVTVILIILIIIFCLI) threads the bilayer. Over 927–947 (EVNSHKRASEKYKDNPSISGA) the chain is Cytoplasmic.

The protein localises to the membrane. The polypeptide is Leucine-rich repeat-containing protein 37B (LRRC37B) (Homo sapiens (Human)).